A 213-amino-acid polypeptide reads, in one-letter code: MRTRIKICGLTREADVDAAVEAGVDAVGFVFYAKSPRAVSVAHAAALARRLPPFVTPVGLFVNAAPHELAAACAAIPTLMLQFHGDETPAQCDAVGRPYLRAARMTPGFDLLNFAQQFSSAQALLLDAYVEGYGGGGKVFDWSLVPSGVTPPLVLSGGLSAANVTDGVLKVRPWAVDVSSGVESAKGIKDADAVRRFCEAVREADARVAASEI.

The protein belongs to the TrpF family.

It carries out the reaction N-(5-phospho-beta-D-ribosyl)anthranilate = 1-(2-carboxyphenylamino)-1-deoxy-D-ribulose 5-phosphate. It participates in amino-acid biosynthesis; L-tryptophan biosynthesis; L-tryptophan from chorismate: step 3/5. The chain is N-(5'-phosphoribosyl)anthranilate isomerase from Methylibium petroleiphilum (strain ATCC BAA-1232 / LMG 22953 / PM1).